A 124-amino-acid chain; its full sequence is Ribonuclease pancreatic (124 aa).

The tract at residues 1 to 24 (KETAAAKFQRQHMDSSTSSASSSN) is disordered. Substrate-binding residues include lysine 7 and arginine 10. Histidine 12 acts as the Proton acceptor in catalysis. Cystine bridges form between cysteine 26–cysteine 84, cysteine 40–cysteine 95, cysteine 58–cysteine 110, and cysteine 65–cysteine 72. A glycan (N-linked (GlcNAc...) asparagine; in river-breed only) is linked at asparagine 34. Substrate is bound by residues 41 to 45 (KPVNT), lysine 66, and arginine 85. The Proton donor role is filled by histidine 119.

This sequence belongs to the pancreatic ribonuclease family. Monomer. Interacts with and forms tight 1:1 complexes with RNH1. Dimerization of two such complexes may occur. Interaction with RNH1 inhibits this protein. In terms of processing, swamp breed ribonuclease do not bind carbohydrate, but there is evidence of a polymorphic form that does. In terms of tissue distribution, pancreas.

It localises to the secreted. It carries out the reaction an [RNA] containing cytidine + H2O = an [RNA]-3'-cytidine-3'-phosphate + a 5'-hydroxy-ribonucleotide-3'-[RNA].. It catalyses the reaction an [RNA] containing uridine + H2O = an [RNA]-3'-uridine-3'-phosphate + a 5'-hydroxy-ribonucleotide-3'-[RNA].. Its function is as follows. Endonuclease that catalyzes the cleavage of RNA on the 3' side of pyrimidine nucleotides. Acts on single-stranded and double-stranded RNA. The chain is Ribonuclease pancreatic (RNASE1) from Bubalus bubalis (Domestic water buffalo).